A 1036-amino-acid chain; its full sequence is Protein translocase subunit SecA, chloroplastic (1036 aa).

A chloroplast-targeting transit peptide spans 1-76; the sequence is MESCARSASQ…KIGELMQVRA (76 aa). 186 to 193 is a binding site for ATP; sequence MRTGEGKT. Residues 995–1036 are disordered; that stretch reads NQEQQQKGKPDSSNVENKRIGDANLNPVSVTESPSSDSPQNT. The span at 1000–1015 shows a compositional bias: basic and acidic residues; it reads QKGKPDSSNVENKRIG. Over residues 1020–1036 the composition is skewed to polar residues; sequence NPVSVTESPSSDSPQNT.

This sequence belongs to the SecA family.

Its subcellular location is the plastid. The protein localises to the chloroplast stroma. It localises to the chloroplast thylakoid membrane. It carries out the reaction ATP + H2O + chloroplast-proteinSide 1 = ADP + phosphate + chloroplast-proteinSide 2.. Has a central role in coupling the hydrolysis of ATP to the transfer of proteins across the thylakoid membrane. This Spinacia oleracea (Spinach) protein is Protein translocase subunit SecA, chloroplastic.